Consider the following 167-residue polypeptide: SsrA-binding protein (167 aa).

Positions 139–167 (QAHDKRHAEKEREWQRDKQRIMRAHNRNA) are disordered. The span at 144 to 158 (RHAEKEREWQRDKQR) shows a compositional bias: basic and acidic residues.

This sequence belongs to the SmpB family.

It localises to the cytoplasm. In terms of biological role, required for rescue of stalled ribosomes mediated by trans-translation. Binds to transfer-messenger RNA (tmRNA), required for stable association of tmRNA with ribosomes. tmRNA and SmpB together mimic tRNA shape, replacing the anticodon stem-loop with SmpB. tmRNA is encoded by the ssrA gene; the 2 termini fold to resemble tRNA(Ala) and it encodes a 'tag peptide', a short internal open reading frame. During trans-translation Ala-aminoacylated tmRNA acts like a tRNA, entering the A-site of stalled ribosomes, displacing the stalled mRNA. The ribosome then switches to translate the ORF on the tmRNA; the nascent peptide is terminated with the 'tag peptide' encoded by the tmRNA and targeted for degradation. The ribosome is freed to recommence translation, which seems to be the essential function of trans-translation. This chain is SsrA-binding protein, found in Xylella fastidiosa (strain 9a5c).